The following is a 100-amino-acid chain: Large ribosomal subunit protein eL21 (100 aa).

Residues 1-21 (MVKRTHGYRYKSRKLLRKKPR) show a composition bias toward basic residues. The segment at 1 to 22 (MVKRTHGYRYKSRKLLRKKPRE) is disordered.

It belongs to the eukaryotic ribosomal protein eL21 family.

The chain is Large ribosomal subunit protein eL21 from Pyrobaculum neutrophilum (strain DSM 2338 / JCM 9278 / NBRC 100436 / V24Sta) (Thermoproteus neutrophilus).